A 472-amino-acid polypeptide reads, in one-letter code: Carboxypeptidase E (472 aa).

Positions 1–21 (MLHAMRPVLLVAALLAVTAHA) are cleaved as a signal peptide. Residues 39–359 (HYHNQAQLEA…KSIFEYVWKS (321 aa)) form the Peptidase M14 domain. The Zn(2+) site is built by His-101 and Glu-104. N-linked (GlcNAc...) asparagine glycosylation is present at Asn-134. His-232 lines the Zn(2+) pocket. Glu-329 (proton donor/acceptor) is an active-site residue. N-linked (GlcNAc...) asparagine glycans are attached at residues Asn-385 and Asn-428.

It belongs to the peptidase M14 family. It depends on Zn(2+) as a cofactor. In terms of tissue distribution, expression is restricted to the nervous system.

It localises to the cell projection. The protein localises to the axon. The protein resides in the perikaryon. Its subcellular location is the cytoplasmic vesicle. It is found in the secretory vesicle lumen. It catalyses the reaction Release of C-terminal arginine or lysine residues from polypeptides.. Functionally, during FMRFamide-like peptide (FaRPs or FLP) and neuropeptide-like protein (NLP) precursor processing, catalyzes the removal of Arg or Lys residues from the C-terminus following the initial endoprotease cleavage. By processing neuropeptides, modulates basal acetylcholine release at the ventral cord neuromuscular junctions. Involved in egg-laying, defecation and locomotion. By processing FLP neuropeptides, regulates the turning step of male mating behavior. Involved in reducing pharyngeal pumping in response to high CO(2) levels. The polypeptide is Carboxypeptidase E (Caenorhabditis elegans).